We begin with the raw amino-acid sequence, 292 residues long: Forkhead box protein R1 (292 aa).

2 disordered regions span residues 31–50 (PPKLPLEKKPNPDKDGPDYE) and 65–166 (PGKL…ASSQ). Composition is skewed to basic and acidic residues over residues 35-47 (PLEKKPNPDKDGP) and 70-79 (VSGRRKREDL). Residues 80-89 (TSTLPSSQPP) are compositionally biased toward polar residues. Positions 129-140 (LTEEEEAEDQED) are enriched in acidic residues. The segment covering 149-161 (PHKRAPLQSRRLR) has biased composition (basic residues). Positions 173-272 (RPPLNYFHLI…EEARALASTR (100 aa)) form a DNA-binding region, fork-head.

In terms of tissue distribution, expressed in testis (at protein level).

The protein localises to the nucleus. The protein resides in the cytoplasm. It is found in the perinuclear region. Transcription factor which acts as both an activator and a repressor. Activates transcription of a number of genes including the heat shock chaperones HSPA1A and HSPA6 and the antioxidant NADPH-dependent reductase DHRS2 which are involved in protection against oxidative stress. Required for normal brain development. This chain is Forkhead box protein R1 (FOXR1), found in Homo sapiens (Human).